The following is a 93-amino-acid chain: MLRTTFLRTPRQLMRKSPRASFSIVTRAAFPHLKNNQDEAEKKEQGLFDSNKKRLDTLEHGKNPDYKQPGMEDLKKKGDDARIEQNRPDDGVY.

Residues 1–25 (MLRTTFLRTPRQLMRKSPRASFSIV) constitute a mitochondrion transit peptide. Positions 30 to 93 (FPHLKNNQDE…EQNRPDDGVY (64 aa)) are disordered. The span at 35-93 (NNQDEAEKKEQGLFDSNKKRLDTLEHGKNPDYKQPGMEDLKKKGDDARIEQNRPDDGVY) shows a compositional bias: basic and acidic residues.

The protein resides in the mitochondrion. This is Protein FMP16, mitochondrial (FMP16) from Saccharomyces cerevisiae (strain ATCC 204508 / S288c) (Baker's yeast).